The following is a 493-amino-acid chain: Proline--tRNA ligase (493 aa).

This sequence belongs to the class-II aminoacyl-tRNA synthetase family. ProS type 3 subfamily. As to quaternary structure, homodimer.

The protein resides in the cytoplasm. It catalyses the reaction tRNA(Pro) + L-proline + ATP = L-prolyl-tRNA(Pro) + AMP + diphosphate. Its function is as follows. Catalyzes the attachment of proline to tRNA(Pro) in a two-step reaction: proline is first activated by ATP to form Pro-AMP and then transferred to the acceptor end of tRNA(Pro). This is Proline--tRNA ligase from Parabacteroides distasonis (strain ATCC 8503 / DSM 20701 / CIP 104284 / JCM 5825 / NCTC 11152).